We begin with the raw amino-acid sequence, 448 residues long: UPF0053 protein sll0260 (448 aa).

The CNNM transmembrane domain occupies 2 to 203 (FSSSVELELF…AQAGMIDEAE (202 aa)). The next 4 helical transmembrane spans lie at 11 to 31 (FFIFVLVVLNGIFSGSEIAIV), 62 to 82 (FLSAVQIGITLIGILTGAVGG), 106 to 126 (LSISLLVGFITYLSLVVGELV), and 142 to 162 (VAPAMHLVAQLTAPLVYLLGV). CBS domains lie at 222–281 (MTPR…GQKI) and 286–345 (IVQP…NDDE).

Belongs to the UPF0053 family.

Its subcellular location is the cell membrane. The chain is UPF0053 protein sll0260 from Synechocystis sp. (strain ATCC 27184 / PCC 6803 / Kazusa).